We begin with the raw amino-acid sequence, 199 residues long: TATA-box-binding protein (199 aa).

Tandem repeats lie at residues 10-86 and 101-177.

Belongs to the TBP family.

General factor that plays a role in the activation of archaeal genes transcribed by RNA polymerase. Binds specifically to the TATA box promoter element which lies close to the position of transcription initiation. This chain is TATA-box-binding protein, found in Pyrobaculum islandicum (strain DSM 4184 / JCM 9189 / GEO3).